Consider the following 359-residue polypeptide: Pheromone receptor 1 (359 aa).

Helical transmembrane passes span 5–25 (VTPF…GWHI), 33–53 (ITLS…SVAW), 71–87 (LRHA…LVIA), 110–130 (IIID…LMIV), 147–167 (FLSL…IVSF), 206–226 (LLVL…GSVS), and 268–288 (LILS…MFGL). Residues 335–359 (TSGGIDGSPHSEKFSINTPTKYEEA) are disordered. Positions 348–359 (FSINTPTKYEEA) are enriched in polar residues.

Belongs to the G-protein coupled receptor 4 family.

The protein resides in the membrane. In terms of biological role, receptor for the A2 pheromone, a prenylated mating factor. This is Pheromone receptor 1 (PRA1) from Ustilago hordei (Barley covered smut fungus).